We begin with the raw amino-acid sequence, 483 residues long: ATP synthase subunit beta (483 aa).

169–176 is an ATP binding site; sequence GGAGVGKT.

Belongs to the ATPase alpha/beta chains family. In terms of assembly, F-type ATPases have 2 components, CF(1) - the catalytic core - and CF(0) - the membrane proton channel. CF(1) has five subunits: alpha(3), beta(3), gamma(1), delta(1), epsilon(1). CF(0) has three main subunits: a(1), b(2) and c(9-12). The alpha and beta chains form an alternating ring which encloses part of the gamma chain. CF(1) is attached to CF(0) by a central stalk formed by the gamma and epsilon chains, while a peripheral stalk is formed by the delta and b chains.

It localises to the cell membrane. The enzyme catalyses ATP + H2O + 4 H(+)(in) = ADP + phosphate + 5 H(+)(out). Its function is as follows. Produces ATP from ADP in the presence of a proton gradient across the membrane. The catalytic sites are hosted primarily by the beta subunits. The protein is ATP synthase subunit beta of Rhodococcus opacus (strain B4).